We begin with the raw amino-acid sequence, 422 residues long: MGMTRMLLECSLSDKLCVIQEKQYEVIIVPTLLVTIFLILLGVILWLFIREQRTQQQRSGPQGIAPVPPPRDLSWEAGHGGNVALPLKETSVENFLGATTPALAKLQVPREQLSEVLEQICSGSCGPIFRANMNTGDPSKPKSVILKALKEPAGLHEVQDFLGRIQFHQYLGKHKNLVQLEGCCTEKLPLYMVLEDVAQGDLLSFLWTCRRDVMTMDGLLYDLTEKQVYHIGKQVLLALEFLQEKHLFHGDVAARNILMQSDLTAKLCGLGLAYEVYTRGAISSTQTIPLKWLAPERLLLRPASIRADVWSFGILLYEMVTLGAPPYPEVPPTSILEHLQRRKIMKRPSSCTHTMYSIMKSCWRWREADRPSPRELRLRLEAAIKTADDEAVLQVPELVVPELYAAVAGIRVESLFYNYSML.

Residues 26-46 (VIIVPTLLVTIFLILLGVILW) form a helical membrane-spanning segment. A Protein kinase domain is found at 114-384 (SEVLEQICSG…ELRLRLEAAI (271 aa)). ATP is bound by residues 120 to 128 (ICSGSCGPI) and Lys147. Asp251 serves as the catalytic Proton acceptor.

This sequence belongs to the protein kinase superfamily. Tyr protein kinase family. In terms of tissue distribution, widely expressed. Highly expressed in brain, placenta and prostate. Expressed in tumor cells such as hepatoma cells L-02, cervix carcinoma cells HeLa, ovary cancer cells Ho8910 and chronic myelogenous leukemia cells K-562, but not in other tumor cells such as epidermoid carcinoma (A-431). Undetectable in most normal lung tissues, widely expressed in lung cancers.

It localises to the membrane. The catalysed reaction is L-tyrosyl-[protein] + ATP = O-phospho-L-tyrosyl-[protein] + ADP + H(+). Its function is as follows. Probable tyrosine protein-kinase, which has strong transforming capabilities on a variety of cell lines. When overexpressed, it can also induce tumor cell invasion as well as metastasis in distant organs. May act by activating both MAP kinase and phosphatidylinositol 3'-kinases (PI3K) pathways. This Homo sapiens (Human) protein is Tyrosine-protein kinase STYK1 (STYK1).